The primary structure comprises 308 residues: FGSLLGICLMTQIITGLLMAMHYTADTTLAFTSVAHTCRNVQFGWLIRNLHANGASMFFICIYLHIGRGFYYGSYLFKETWNTGVILLLTLMATAFVGYVLPWGQMSFWGATVITNLFSAIPYIGQTLVEWAWGGFSVDNPMLTRFFALHFLLPFMIAGLTFIHLTFLHETGSNNPLGISSNCDKIPFHPYFSTKDILGFLAMLVPLTALAMFSPNLLGDPENFTPANPLVTPPHIKPEWYFLFAYAILRSIPNKLGGVLALAASVLILFLIPFLHKSKQRTMTFRPLSQLLFWILVTNLLILTWVGS.

The next 4 helical transmembrane spans lie at 1 to 21 (FGSLLGICLMTQIITGLLMAM), 45 to 66 (WLIRNLHANGASMFFICIYLHI), 81 to 101 (WNTGVILLLTLMATAFVGYVL), and 146 to 166 (FFALHFLLPFMIAGLTFIHLT). His51 and His65 together coordinate heme b. Residues His150 and His164 each coordinate heme b. His169 provides a ligand contact to a ubiquinone. The next 3 membrane-spanning stretches (helical) occupy residues 194–214 (TKDILGFLAMLVPLTALAMFS), 256–276 (LGGVLALAASVLILFLIPFLH), and 288–308 (LSQLLFWILVTNLLILTWVGS).

It belongs to the cytochrome b family. The cytochrome bc1 complex contains 11 subunits: 3 respiratory subunits (MT-CYB, CYC1 and UQCRFS1), 2 core proteins (UQCRC1 and UQCRC2) and 6 low-molecular weight proteins (UQCRH/QCR6, UQCRB/QCR7, UQCRQ/QCR8, UQCR10/QCR9, UQCR11/QCR10 and a cleavage product of UQCRFS1). This cytochrome bc1 complex then forms a dimer. It depends on heme b as a cofactor.

Its subcellular location is the mitochondrion inner membrane. Its function is as follows. Component of the ubiquinol-cytochrome c reductase complex (complex III or cytochrome b-c1 complex) that is part of the mitochondrial respiratory chain. The b-c1 complex mediates electron transfer from ubiquinol to cytochrome c. Contributes to the generation of a proton gradient across the mitochondrial membrane that is then used for ATP synthesis. This chain is Cytochrome b (MT-CYB), found in Asthenes dorbignyi (Creamy-breasted canastero).